A 347-amino-acid polypeptide reads, in one-letter code: Probable G-protein coupled receptor 148 (347 aa).

Over 1–51 the chain is Extracellular; sequence MGDELAPCPVGTTAWPALIQLISKTPCMPQAASNTSLGLGDLRVPSSMLYW. N-linked (GlcNAc...) asparagine glycosylation is present at Asn-34. The helical transmembrane segment at 52–72 threads the bilayer; sequence LFLPSSLLAAATLAVSPLLLV. Residues 73–85 are Cytoplasmic-facing; it reads TILRNQRLRQEPH. A helical membrane pass occupies residues 86–106; sequence YLLPANILLSDLAYILLHMLI. Topologically, residues 107 to 130 are extracellular; sequence SSSSLGGWELGRMACGILTDAVFA. A helical membrane pass occupies residues 131–151; the sequence is ACTSTILSFTAIVLHTYLAVI. At 152 to 165 the chain is on the cytoplasmic side; sequence HPLRYLSFMSHGAA. The chain crosses the membrane as a helical span at residues 166 to 186; it reads WKAVALIWLVACCFPTFLIWL. Over 187-214 the chain is Extracellular; that stretch reads SKWQDAQLEEQGASYILPPSMGTQPGCG. A helical transmembrane segment spans residues 215 to 235; that stretch reads LLVIVTYTSILCVLFLCTALI. Topologically, residues 236–261 are cytoplasmic; the sequence is ANCFWRIYAEAKTSGIWGQGYSRARG. The chain crosses the membrane as a helical span at residues 262–282; it reads TLLIHSVLITLYVSTGVVFSL. Over 283-299 the chain is Extracellular; the sequence is DMVLTRYHHIDSGTHTW. A helical membrane pass occupies residues 300-322; the sequence is LLAANSEVLMMLPRAMLTYLYLL. Over 323–347 the chain is Cytoplasmic; it reads RYRQLLGMVRGHLPSRRHQAIFTIS.

Belongs to the G-protein coupled receptor 1 family. As to expression, expression restricted to nervous system and testis. Is also detected in several tumors types, most notably prostate cancer.

The protein resides in the cell membrane. In terms of biological role, orphan receptor. In Homo sapiens (Human), this protein is Probable G-protein coupled receptor 148 (GPR148).